Here is a 215-residue protein sequence, read N- to C-terminus: Cytochrome b-c1 complex subunit Rieske, mitochondrial (215 aa).

A mitochondrion-targeting transit peptide spans 1-22 (MLGIRSSVKTCFKPMSLTSKRL). Residues 23-30 (ISQSLLAS) constitute a propeptide, removed in mature form. Residues 31 to 50 (KSTYRTPNFDDVLKENNDAD) lie on the Mitochondrial matrix side of the membrane. Residues 51–80 (KGRSYAYFMVGAMGLLSSAGAKSTVETFIS) form a helical membrane-spanning segment. The Mitochondrial intermembrane portion of the chain corresponds to 81–215 (SMTATADVLA…EFDGDKVIVG (135 aa)). Positions 90–93 (AMAK) are hinge. In terms of domain architecture, Rieske spans 123–214 (PHEIQEANSV…YEFDGDKVIV (92 aa)). [2Fe-2S] cluster is bound by residues Cys-159, His-161, Cys-178, and His-181. Cys-164 and Cys-180 form a disulfide bridge.

Belongs to the Rieske iron-sulfur protein family. As to quaternary structure, component of the ubiquinol-cytochrome c oxidoreductase (cytochrome b-c1 complex, complex III, CIII), a multisubunit enzyme composed of 10 subunits. The complex is composed of 3 respiratory subunits cytochrome b (COB), cytochrome c1 (CYT1) and Rieske protein (RIP1), 2 core protein subunits COR1 and QCR2, and 5 low-molecular weight protein subunits QCR6, QCR7, QCR8, QCR9 and QCR10. The complex exists as an obligatory dimer and forms supercomplexes (SCs) in the inner mitochondrial membrane with a monomer or a dimer of cytochrome c oxidase (complex IV, CIV), resulting in 2 different assemblies (supercomplexes III(2)IV and III(2)IV(2)). RIP1 interacts with QCR10 on the intermembrane space (IMS) side, and with QCR9. [2Fe-2S] cluster serves as cofactor. Processed by both the mitochondrial processing peptidase (MPP) and the mitochondrial intermediate protease (MIP). Initially, MPP removes 22 amino acids from the newly imported precursor in the mitochondrial matrix. This proteolytic processing is then followed by a second proteolytic cleavage by MIP, which removes an octapeptide to generate mature-sized RIP1.

The protein resides in the mitochondrion inner membrane. It carries out the reaction a quinol + 2 Fe(III)-[cytochrome c](out) = a quinone + 2 Fe(II)-[cytochrome c](out) + 2 H(+)(out). Functionally, component of the ubiquinol-cytochrome c oxidoreductase, a multisubunit transmembrane complex that is part of the mitochondrial electron transport chain which drives oxidative phosphorylation. The respiratory chain contains 3 multisubunit complexes succinate dehydrogenase (complex II, CII), ubiquinol-cytochrome c oxidoreductase (cytochrome b-c1 complex, complex III, CIII) and cytochrome c oxidase (complex IV, CIV), that cooperate to transfer electrons derived from NADH and succinate to molecular oxygen, creating an electrochemical gradient over the inner membrane that drives transmembrane transport and the ATP synthase. The cytochrome b-c1 complex catalyzes electron transfer from ubiquinol to cytochrome c, linking this redox reaction to translocation of protons across the mitochondrial inner membrane, with protons being carried across the membrane as hydrogens on the quinol. In the process called Q cycle, 2 protons are consumed from the matrix, 4 protons are released into the intermembrane space and 2 electrons are passed to cytochrome c. The Rieske protein is a catalytic core subunit containing a [2Fe-2S] iron-sulfur cluster. It cycles between 2 conformational states during catalysis to transfer electrons from the quinol bound in the Q(0) site in cytochrome b (COB) to cytochrome c1 (CYT1). The polypeptide is Cytochrome b-c1 complex subunit Rieske, mitochondrial (RIP1) (Saccharomyces cerevisiae (strain ATCC 204508 / S288c) (Baker's yeast)).